An 89-amino-acid chain; its full sequence is MDQEQENIIVLTDEDGNELEFEELDRVEVDGKEYAILLPLDDEEDEAIILRVEYEENGEEVFSHIEDDEEWEKVADFWQELSEEDGEEE.

It belongs to the UPF0473 family.

The polypeptide is UPF0473 protein Helmi_02360 (Heliobacterium modesticaldum (strain ATCC 51547 / Ice1)).